The chain runs to 3330 residues: Laminin subunit alpha-3 (3330 aa).

An N-terminal signal peptide occupies residues 1-31; the sequence is MAVALGRAPRSLPLLLTLLLLLLLRMSPSWS. One can recognise a Laminin N-terminal domain in the interval 40–295; the sequence is SSRSLHPPYF…SIKDISVGGR (256 aa). N-linked (GlcNAc...) asparagine glycosylation occurs at N139. A domain V region spans residues 295–725; sequence RCVCNGHAEA…NNYYFPDLHH (431 aa). 27 cysteine pairs are disulfide-bonded: C296/C305, C298/C316, C318/C327, C330/C350, C353/C362, C355/C387, C390/C399, C402/C420, C423/C433, C425/C440, C442/C451, C454/C464, C488/C500, C490/C506, C508/C517, C520/C530, C533/C545, C535/C552, C554/C563, C566/C583, C628/C642, C630/C649, C651/C660, C663/C678, C681/C693, C683/C700, and C702/C711. 8 consecutive Laminin EGF-like domains span residues 296 to 350, 353 to 420, 423 to 464, 488 to 530, 533 to 576, 582 to 625, 628 to 678, and 681 to 725; these read CVCN…HNEC, CNCH…LHGC, CSCD…FPFC, CDCN…FPIC, CQCS…FPYC, VCHP…PRGC, CQCH…YFGC, and CQCD…DLHH. A glycan (N-linked (GlcNAc...) asparagine) is linked at N445. Residues 793–1262 are domain IV 1 (domain IV B); the sequence is TEAISGRITL…VAFYHNGAIP (470 aa). The interval 1263–1462 is domain III B; that stretch reads CECDPAGTAG…CFCFGVNTDC (200 aa). Disulfide bonds link C1309-C1316, C1311-C1323, C1325-C1334, C1337-C1350, C1353-C1368, C1355-C1375, C1377-C1386, C1389-C1399, C1402-C1414, C1404-C1421, C1423-C1432, and C1435-C1450. Laminin EGF-like domains lie at 1309–1352, 1353–1401, and 1402–1452; these read CNCG…GCDV, CNCS…ECVP, and CSCN…GCTK. N1354 carries N-linked (GlcNAc...) asparagine glycosylation. A Laminin EGF-like 12; first part domain is found at 1453-1462; sequence CFCFGVNTDC. Positions 1466-1650 constitute a Laminin IV type A domain; it reads HKQRAKFVDM…SGPRAHLVEM (185 aa). The region spanning 1651–1683 is the Laminin EGF-like 12; second part domain; sequence CACPPDYTGDSCQGCRPGYYWDNKSLPVGRCVP. Residues 1651–1818 form a domain III A region; that stretch reads CACPPDYTGD…DGSPAEECDD (168 aa). An N-linked (GlcNAc...) asparagine glycan is attached at N1673. 8 cysteine pairs are disulfide-bonded: C1684-C1693, C1686-C1700, C1703-C1712, C1715-C1728, C1731-C1743, C1733-C1752, C1754-C1763, and C1766-C1781. Laminin EGF-like domains follow at residues 1684–1730 and 1731–1783; these read CNCN…SCRV and CPCP…SCQP. Positions 1784 to 1818 constitute a Laminin EGF-like 15; truncated domain; sequence CNCNSNGQLGPCDPLTGDCVNQEPKDGSPAEECDD. A domain II and I region spans residues 1819-2385; it reads CDSCVMTLLN…ARDAANKVAI (567 aa). 4 coiled-coil regions span residues 1851–1980, 2012–2057, 2088–2165, and 2211–2238; these read TGAL…LRSR, VENN…HENE, LLQT…GDEL, and KRAK…QQVS. The N-linked (GlcNAc...) asparagine glycan is linked to N2159. N2261 is a glycosylation site (N-linked (GlcNAc...) asparagine). Residues 2274-2276 carry the Cell attachment site motif; it reads RGD. The stretch at 2318 to 2383 forms a coiled coil; it reads SARREDFSKA…QQARDAANKV (66 aa). N-linked (GlcNAc...) asparagine glycosylation is found at N2332, N2361, N2498, N2580, and N2747. 5 Laminin G-like domains span residues 2386–2587, 2594–2756, 2763–2923, 2983–3147, and 3154–3327; these read PMRF…VEPC, SDKN…TKKC, VRTA…LGGC, ALQF…VSPC, and KGIY…LNGC. 3 disulfides stabilise this stretch: C2557/C2587, C2733/C2756, and C2891/C2923. N3094 carries N-linked (GlcNAc...) asparagine glycosylation. C3124 and C3147 are joined by a disulfide. The N-linked (GlcNAc...) asparagine glycan is linked to N3270. C3299 and C3327 are oxidised to a cystine.

As to quaternary structure, laminin is a complex glycoprotein, consisting of three different polypeptide chains (alpha, beta, gamma), which are bound to each other by disulfide bonds into a cross-shaped molecule comprising one long and three short arms with globules at each end. Alpha-3 is a subunit of laminin-5 (laminin-332 or epiligrin/kalinin/nicein), laminin-6 (laminin-311 or K-laminin) and laminin-7 (laminin-321 or KS-laminin). In terms of tissue distribution, basal membrane of the upper alimentary tract and urinary and nasal epithelia, salivary glands and teeth (both variants). Isoform A is predominantly expressed in skin, hair follicles and developing neurons of the trigeminal ganglion. Isoform B was found in bronchi, alveoli, stomach, intestinal crypts, whisker pads, CNS, telencephalic neuroectoderm, thalamus, Rathke pouch and periventricular subependymal germinal layer.

It localises to the secreted. The protein localises to the extracellular space. It is found in the extracellular matrix. Its subcellular location is the basement membrane. Its function is as follows. Binding to cells via a high affinity receptor, laminin is thought to mediate the attachment, migration and organization of cells into tissues during embryonic development by interacting with other extracellular matrix components. In terms of biological role, laminin-5 is thought to be involved in (1) cell adhesion via integrin alpha-3/beta-1 in focal adhesion and integrin alpha-6/beta-4 in hemidesmosomes, (2) signal transduction via tyrosine phosphorylation of pp125-FAK and p80, (3) differentiation of keratinocytes. This Mus musculus (Mouse) protein is Laminin subunit alpha-3 (Lama3).